Here is a 104-residue protein sequence, read N- to C-terminus: Large ribosomal subunit protein uL24 (104 aa).

Belongs to the universal ribosomal protein uL24 family. As to quaternary structure, part of the 50S ribosomal subunit.

Its function is as follows. One of two assembly initiator proteins, it binds directly to the 5'-end of the 23S rRNA, where it nucleates assembly of the 50S subunit. Functionally, one of the proteins that surrounds the polypeptide exit tunnel on the outside of the subunit. The polypeptide is Large ribosomal subunit protein uL24 (Caulobacter sp. (strain K31)).